Here is a 408-residue protein sequence, read N- to C-terminus: Guanine nucleotide-binding protein alpha-14 subunit (408 aa).

GTP contacts are provided by residues 38–45, 78–85, 201–205, 216–222, 241–245, 285–288, 325–328, and alanine 380; these read HSEELEAK, GGPSSGKS, NRISK, VHSRKAT, DVGGQ, FPNF, and NKVD. The G-alpha domain maps to 70–408; the sequence is SHIKILILGG…KANSKATGLS (339 aa). The interval 73 to 86 is G1 motif; sequence KILILGGPSSGKST. Serine 85 serves as a coordination point for Mg(2+). The tract at residues 214-222 is G2 motif; sequence DIVHSRKAT. A Mg(2+)-binding site is contributed by threonine 222. The tract at residues 237–246 is G3 motif; the sequence is LLMVDVGGQR. Residues 321-328 form a G4 motif region; sequence LLFFNKVD. The G5 motif stretch occupies residues 378–383; it reads TTATNT.

Belongs to the G-alpha family. In terms of assembly, g proteins are composed of 3 units; alpha, beta and gamma. The alpha chain contains the guanine nucleotide binding site.

Guanine nucleotide-binding proteins (G proteins) are involved as modulators or transducers in various transmembrane signaling systems. This Caenorhabditis briggsae protein is Guanine nucleotide-binding protein alpha-14 subunit (gpa-14).